We begin with the raw amino-acid sequence, 318 residues long: tRNA dimethylallyltransferase (318 aa).

Residue G13 to T20 coordinates ATP. Residue T15–T20 participates in substrate binding. Residues D38–Q41 form an interaction with substrate tRNA region.

The protein belongs to the IPP transferase family. As to quaternary structure, monomer. It depends on Mg(2+) as a cofactor.

It catalyses the reaction adenosine(37) in tRNA + dimethylallyl diphosphate = N(6)-dimethylallyladenosine(37) in tRNA + diphosphate. Its function is as follows. Catalyzes the transfer of a dimethylallyl group onto the adenine at position 37 in tRNAs that read codons beginning with uridine, leading to the formation of N6-(dimethylallyl)adenosine (i(6)A). This chain is tRNA dimethylallyltransferase, found in Bacillus pumilus (strain SAFR-032).